We begin with the raw amino-acid sequence, 246 residues long: DNA repair protein RecO (246 aa).

Belongs to the RecO family.

Its function is as follows. Involved in DNA repair and RecF pathway recombination. In Methylobacterium nodulans (strain LMG 21967 / CNCM I-2342 / ORS 2060), this protein is DNA repair protein RecO.